The chain runs to 395 residues: Acetate kinase 1 (395 aa).

Position 8 (asparagine 8) interacts with Mg(2+). Lysine 15 provides a ligand contact to ATP. Arginine 89 is a binding site for substrate. Aspartate 146 serves as the catalytic Proton donor/acceptor. ATP-binding positions include 206–210 (HIGNG), 283–285 (DMR), and 330–334 (GIGEN). Glutamate 382 is a binding site for Mg(2+).

It belongs to the acetokinase family. Homodimer. Mg(2+) is required as a cofactor. Mn(2+) serves as cofactor.

The protein resides in the cytoplasm. The enzyme catalyses acetate + ATP = acetyl phosphate + ADP. The protein operates within metabolic intermediate biosynthesis; acetyl-CoA biosynthesis; acetyl-CoA from acetate: step 1/2. Its function is as follows. Catalyzes the formation of acetyl phosphate from acetate and ATP. Can also catalyze the reverse reaction. The chain is Acetate kinase 1 from Lactococcus lactis subsp. lactis (strain IL1403) (Streptococcus lactis).